We begin with the raw amino-acid sequence, 548 residues long: Glucose-6-phosphate isomerase (548 aa).

The active-site Proton donor is Glu355. Active-site residues include His386 and Lys514.

It belongs to the GPI family.

The protein localises to the cytoplasm. It catalyses the reaction alpha-D-glucose 6-phosphate = beta-D-fructose 6-phosphate. It participates in carbohydrate biosynthesis; gluconeogenesis. Its pathway is carbohydrate degradation; glycolysis; D-glyceraldehyde 3-phosphate and glycerone phosphate from D-glucose: step 2/4. In terms of biological role, catalyzes the reversible isomerization of glucose-6-phosphate to fructose-6-phosphate. The protein is Glucose-6-phosphate isomerase of Photorhabdus laumondii subsp. laumondii (strain DSM 15139 / CIP 105565 / TT01) (Photorhabdus luminescens subsp. laumondii).